The sequence spans 183 residues: Putative 3-methyladenine DNA glycosylase (183 aa).

The protein belongs to the DNA glycosylase MPG family.

This chain is Putative 3-methyladenine DNA glycosylase, found in Wolbachia pipientis subsp. Culex pipiens (strain wPip).